We begin with the raw amino-acid sequence, 123 residues long: Large ribosomal subunit protein bL12 (123 aa).

This sequence belongs to the bacterial ribosomal protein bL12 family. In terms of assembly, homodimer. Part of the ribosomal stalk of the 50S ribosomal subunit. Forms a multimeric L10(L12)X complex, where L10 forms an elongated spine to which 2 to 4 L12 dimers bind in a sequential fashion. Binds GTP-bound translation factors.

Forms part of the ribosomal stalk which helps the ribosome interact with GTP-bound translation factors. Is thus essential for accurate translation. This is Large ribosomal subunit protein bL12 from Chlorobium phaeovibrioides (strain DSM 265 / 1930) (Prosthecochloris vibrioformis (strain DSM 265)).